We begin with the raw amino-acid sequence, 254 residues long: Pimeloyl-[acyl-carrier protein] methyl ester esterase (254 aa).

The AB hydrolase-1 domain maps to 16–241; the sequence is LVLLHGWGMN…QSSHAPFMTE (226 aa). Residues tryptophan 22, 82–83, and 143–147 each bind substrate; these read SL and FMALQ. Serine 82 acts as the Nucleophile in catalysis. Active-site residues include aspartate 207 and histidine 235. Histidine 235 is a binding site for substrate.

This sequence belongs to the AB hydrolase superfamily. Carboxylesterase BioH family. In terms of assembly, monomer.

It localises to the cytoplasm. The catalysed reaction is 6-carboxyhexanoyl-[ACP] methyl ester + H2O = 6-carboxyhexanoyl-[ACP] + methanol + H(+). It functions in the pathway cofactor biosynthesis; biotin biosynthesis. Its function is as follows. The physiological role of BioH is to remove the methyl group introduced by BioC when the pimeloyl moiety is complete. It allows to synthesize pimeloyl-ACP via the fatty acid synthetic pathway through the hydrolysis of the ester bonds of pimeloyl-ACP esters. The protein is Pimeloyl-[acyl-carrier protein] methyl ester esterase of Vibrio campbellii (strain ATCC BAA-1116).